A 237-amino-acid chain; its full sequence is uncharacterized protein (237 aa).

21 to 28 (GCDGSGKS) serves as a coordination point for ATP.

It to E.coli YghR and YghT.

This is an uncharacterized protein from Escherichia coli (strain K12).